The following is a 364-amino-acid chain: Anionic peroxidase (364 aa).

Positions 1 to 20 are cleaved as a signal peptide; that stretch reads MASFMKQLSLVLSFIALALA. Positions 21–66 are excised as a propeptide; the sequence is GCAVYQNTQTAMKDQLKVTPTWLDNTLKSTNLLSLGLGKPSGGKLG. H99 functions as the Proton acceptor in the catalytic mechanism. Positions 100, 103, 105, and 107 each coordinate Ca(2+). An intrachain disulfide couples C101 to C106. N113, N188, N202, and N216 each carry an N-linked (GlcNAc...) asparagine glycan. 2 disulfides stabilise this stretch: C155/C343 and C234/C255. A heme b-binding site is contributed by H227. T228 provides a ligand contact to Ca(2+). 2 N-linked (GlcNAc...) asparagine glycosylation sites follow: N254 and N260. The Ca(2+) site is built by D268, T270, and D275. N-linked (GlcNAc...) asparagine glycosylation is present at N299.

Belongs to the peroxidase family. Classical plant (class III) peroxidase subfamily. Ca(2+) serves as cofactor. It depends on heme b as a cofactor. As to expression, highly expressed in suspension cultured cells and calli. Weak expression also found in the stems of intact plants. No expression in leaf, tuberous root and non-tuberous root.

The protein localises to the secreted. It carries out the reaction 2 a phenolic donor + H2O2 = 2 a phenolic radical donor + 2 H2O. Functionally, removal of H(2)O(2), oxidation of toxic reductants, biosynthesis and degradation of lignin, suberization, auxin catabolism, response to environmental stresses such as wounding, pathogen attack and oxidative stress. These functions might be dependent on each isozyme/isoform in each plant tissue. May contribute to protection against cold-induced oxidative stress. The polypeptide is Anionic peroxidase (Ipomoea batatas (Sweet potato)).